Reading from the N-terminus, the 510-residue chain is Beta-glucosidase 12 (510 aa).

An N-terminal signal peptide occupies residues 1–24 (MAAAGAMPGGLLLTFLLLAVVASG). Gln53 contributes to the a beta-D-glucoside binding site. Asn122 is a glycosylation site (N-linked (GlcNAc...) asparagine). Residues His157 and 202–203 (NE) contribute to the a beta-D-glucoside site. Glu203 (proton donor) is an active-site residue. 2 disulfides stabilise this stretch: Cys208-Cys243 and Cys222-Cys230. N-linked (GlcNAc...) asparagine glycosylation is present at Asn229. Tyr346 is a binding site for a beta-D-glucoside. N-linked (GlcNAc...) asparagine glycans are attached at residues Asn361 and Asn371. Glu417 serves as a coordination point for a beta-D-glucoside. The active-site Nucleophile is the Glu417. Asn425 carries an N-linked (GlcNAc...) asparagine glycan. A beta-D-glucoside-binding positions include Trp466, 473–474 (EW), and Phe482.

The protein belongs to the glycosyl hydrolase 1 family.

Its subcellular location is the secreted. The enzyme catalyses Hydrolysis of terminal, non-reducing beta-D-glucosyl residues with release of beta-D-glucose.. Hydrolyzes p-nitrophenyl beta-D-glucoside, p-nitrophenyl beta-D-galactoside, p-nitrophenyl beta-D-xyloside, p-nitrophenyl beta-D-fucoside, p-nitrophenyl beta-L-arabinoside, cello-oligosaccharides and laminaribiose. The chain is Beta-glucosidase 12 from Oryza sativa subsp. japonica (Rice).